The following is a 1030-amino-acid chain: Importin beta-like SAD2 homolog (1030 aa).

N-acetylmethionine is present on methionine 1. In terms of domain architecture, Importin N-terminal spans 25 to 99 (AEQSLNQLQH…RNQILVFVSQ (75 aa)). Disordered stretches follow at residues 886-928 (AAKA…GSTL) and 940-964 (SYSD…PIDE). 2 stretches are compositionally biased toward acidic residues: residues 890–924 (EEEE…DETD) and 943–964 (DDDD…PIDE).

It belongs to the importin beta family.

It localises to the cytoplasm. It is found in the nucleus. Functionally, functions probably in nuclear protein import, either by acting as autonomous nuclear transport receptor or as an adapter-like protein in association with other importin subunits. In Arabidopsis thaliana (Mouse-ear cress), this protein is Importin beta-like SAD2 homolog.